The following is a 226-amino-acid chain: PKHD-type hydroxylase TERTU_2553 (226 aa).

The 100-residue stretch at 78-177 (KIYPPKFNCY…RVASFIWIQS (100 aa)) folds into the Fe2OG dioxygenase domain. Residues His-96, Asp-98, and His-158 each coordinate Fe cation. Residue Arg-168 participates in 2-oxoglutarate binding.

Requires Fe(2+) as cofactor. It depends on L-ascorbate as a cofactor.

In Teredinibacter turnerae (strain ATCC 39867 / T7901), this protein is PKHD-type hydroxylase TERTU_2553.